A 185-amino-acid polypeptide reads, in one-letter code: Large ribosomal subunit protein uL22 (185 aa).

It belongs to the universal ribosomal protein uL22 family. In terms of assembly, part of the 50S ribosomal subunit.

Functionally, this protein binds specifically to 23S rRNA. It makes multiple contacts with different domains of the 23S rRNA in the assembled 50S subunit and ribosome. In terms of biological role, the globular domain of the protein is located near the polypeptide exit tunnel on the outside of the subunit, while an extended beta-hairpin is found that lines the wall of the exit tunnel in the center of the 70S ribosome. The protein is Large ribosomal subunit protein uL22 of Pyrobaculum aerophilum (strain ATCC 51768 / DSM 7523 / JCM 9630 / CIP 104966 / NBRC 100827 / IM2).